A 297-amino-acid chain; its full sequence is Aspartate carbamoyltransferase catalytic subunit (297 aa).

2 residues coordinate carbamoyl phosphate: R48 and T49. Residue K76 coordinates L-aspartate. Residues R98, H129, and Q132 each contribute to the carbamoyl phosphate site. Residues R162 and R214 each contribute to the L-aspartate site. 2 residues coordinate carbamoyl phosphate: A257 and P258.

The protein belongs to the aspartate/ornithine carbamoyltransferase superfamily. ATCase family. Heterododecamer (2C3:3R2) of six catalytic PyrB chains organized as two trimers (C3), and six regulatory PyrI chains organized as three dimers (R2).

The catalysed reaction is carbamoyl phosphate + L-aspartate = N-carbamoyl-L-aspartate + phosphate + H(+). The protein operates within pyrimidine metabolism; UMP biosynthesis via de novo pathway; (S)-dihydroorotate from bicarbonate: step 2/3. Catalyzes the condensation of carbamoyl phosphate and aspartate to form carbamoyl aspartate and inorganic phosphate, the committed step in the de novo pyrimidine nucleotide biosynthesis pathway. The chain is Aspartate carbamoyltransferase catalytic subunit from Leuconostoc mesenteroides subsp. mesenteroides (strain ATCC 8293 / DSM 20343 / BCRC 11652 / CCM 1803 / JCM 6124 / NCDO 523 / NBRC 100496 / NCIMB 8023 / NCTC 12954 / NRRL B-1118 / 37Y).